The primary structure comprises 246 residues: Zorya protein ZorB (246 aa).

The chain crosses the membrane as a helical span at residues 20-40 (FWISYADLMTAMMVLFLVVMV). Residues 86–218 (CHDNRISFGE…RVELRMQFFG (133 aa)) enclose the OmpA-like domain.

The protein belongs to the MotB family.

It is found in the cell inner membrane. Functionally, component of antiviral defense system Zorya type I, composed of ZorA, ZorB, ZorC and ZorD. Expression of Zorya type I in E.coli (strain MG1655) confers 10,000-fold resistance to phage SECphi27, 100-fold resistance to lambda, and 10-fold resistance to T7. While most T7 infected Zorya-containing cells undergo abortive infection, a minority produce viable phage progeny. These eventually accumulate to a high multiplicity of infection, leading to culture collapse by 2 hours after initial infection. ZorA and ZorB probably assemble in the cell inner membrane and exert their effect there. The sequence is that of Zorya protein ZorB from Escherichia coli O139:H28 (strain E24377A / ETEC).